The following is a 122-amino-acid chain: Large ribosomal subunit protein uL14 (122 aa).

Belongs to the universal ribosomal protein uL14 family. As to quaternary structure, part of the 50S ribosomal subunit. Forms a cluster with proteins L3 and L19. In the 70S ribosome, L14 and L19 interact and together make contacts with the 16S rRNA in bridges B5 and B8.

Binds to 23S rRNA. Forms part of two intersubunit bridges in the 70S ribosome. This is Large ribosomal subunit protein uL14 from Frankia alni (strain DSM 45986 / CECT 9034 / ACN14a).